Consider the following 230-residue polypeptide: 3-beta-hydroxysteroid-Delta(8),Delta(7)-isomerase (230 aa).

An N-acetylthreonine modification is found at threonine 2. A run of 4 helical transmembrane segments spans residues 29-49 (SHILVGLFSISGGLIVITWLL), 66-86 (LCWFAVCTFIHLVIEGWFSLY), 121-141 (METVTACLWGPLSLWVVIAFL), and 185-205 (FWFYFVFLNAVWLVIPSILVL). An EXPERA domain is found at 61-204 (GRRLALCWFA…VWLVIPSILV (144 aa)).

It belongs to the EBP family.

The protein localises to the endoplasmic reticulum membrane. It is found in the nucleus envelope. The protein resides in the cytoplasmic vesicle. The catalysed reaction is lathosterol = 5alpha-cholest-8-en-3beta-ol. The enzyme catalyses zymosterol = 5alpha-cholesta-7,24-dien-3beta-ol. It carries out the reaction 5,6alpha-epoxy-5alpha-cholestan-3beta-ol + H2O = 5alpha-cholestane-3beta,5,6beta-triol. It catalyses the reaction 5,6beta-epoxy-5beta-cholestan-3beta-ol + H2O = 5alpha-cholestane-3beta,5,6beta-triol. It participates in steroid biosynthesis; cholesterol biosynthesis. Functionally, isomerase that catalyzes the conversion of Delta(8)-sterols to their corresponding Delta(7)-isomers. In terms of biological role, component of the microsomal antiestrogen binding site (AEBS), a multiproteic complex at the ER membrane that consists of an association between EBP and 7-dehydrocholesterol reductase/DHCR7. This complex is responsible for cholesterol-5,6-epoxide hydrolase (ChEH) activity, which consists in the hydration of cholesterol-5,6-epoxides (5,6-EC) into cholestane-3beta,5alpha,6beta-triol (CT). The precise role of each component of this complex has not been described yet. The protein is 3-beta-hydroxysteroid-Delta(8),Delta(7)-isomerase of Mus musculus (Mouse).